The sequence spans 496 residues: Sugar transporter ERD6 (496 aa).

The next 6 helical transmembrane spans lie at 58–78, 94–114, 128–148, 156–176, 183–203, and 211–231; these read VFLSTFVAVSGSFCTGCGVGF, VAEYSMFGSILTLGGLIGAVF, MLFCEFFCITGWLCVALAQNA, LLLGIGVGIFSYVIPVYIAEI, GSFVFANQLMQNCGISLFFII, and LLTVVGLVPCVFHVFCLFFIP. A Phosphoserine modification is found at Ser-256. Helical transmembrane passes span 292 to 312, 329 to 349, 364 to 384, 394 to 414, 430 to 450, and 456 to 476; these read YPLIIGVGLMFLQQLCGSSGV, IGTSVIATIMVPKAMLATVLV, AMGLSALLLSVSYGFQSFGIL, IGVLGHIVSFAMGMGGLPWII, LVTVTNWLFGWIITYTFNFML, and GMFLIFSMVSASSIVFIYFLV.

It belongs to the major facilitator superfamily. Sugar transporter (TC 2.A.1.1) family. In terms of tissue distribution, expressed in both shoots and roots. In roots, expressed in epidermal cells and especially strongly in cortex cells. In flowers, expressed in sepals.

The protein localises to the membrane. In terms of biological role, sugar transporter. This Arabidopsis thaliana (Mouse-ear cress) protein is Sugar transporter ERD6 (ERD6).